We begin with the raw amino-acid sequence, 92 residues long: Large ribosomal subunit protein eL43z (92 aa).

A C4-type zinc finger spans residues 39–60; the sequence is CEFCGKYSVKRKVVGIWGCKDC.

Belongs to the eukaryotic ribosomal protein eL43 family.

In Arabidopsis thaliana (Mouse-ear cress), this protein is Large ribosomal subunit protein eL43z (RPL37AB).